Here is a 182-residue protein sequence, read N- to C-terminus: Transcription termination/antitermination protein NusG (182 aa).

In terms of domain architecture, KOW spans 130–161 (VGEVVRVNEGPFADFNGTVEEVDYEKSRLKVS).

Belongs to the NusG family.

Functionally, participates in transcription elongation, termination and antitermination. The chain is Transcription termination/antitermination protein NusG from Vibrio vulnificus (strain CMCP6).